We begin with the raw amino-acid sequence, 195 residues long: Apoptosis-associated speck-like protein containing a CARD (195 aa).

In terms of domain architecture, Pyrin spans 1–91; that stretch reads MGCTRDAILD…AEQLQETMSK (91 aa). Residues Lys-55 and Lys-174 each participate in a glycyl lysine isopeptide (Lys-Gly) (interchain with G-Cter in ubiquitin) cross-link. The region spanning 107-195 is the CARD domain; sequence TAKPGLHFVD…PYLVDDLEQS (89 aa). The residue at position 195 (Ser-195) is a Phosphoserine.

In terms of assembly, self-associates; enforced oligomerization induces apoptosis, NF-kappa-B regulation and interleukin-1 beta secretion. Homooligomers can form disk-like particles of approximately 12 nm diameter and approximately 1 nm height. Component of several inflammasomes containing one pattern recognition receptor/sensor, such as NLRP1, NLRP2, NLRP3, NLRP6, NLRC4, AIM2, MEFV or NOD2, and probably NLRC4 or NLRP12. Major component of the ASC pyroptosome, a 1-2 um supramolecular assembly (one per macrophage cell) which consists of oligomerized PYCARD dimers and CASP1. Interacts with CASP1 (precursor form); the interaction induces activation of CASP1 leading to the processing of interleukin-1 beta; PYCARD competes with RIPK2 for binding to CASP1. Interacts with NLRP3; the interaction requires the homooligomerization of NLRP3. Interacts with NLRP2, NLRC4, MEFV, CARD16, AIM2, NOD2, RIGI, RIPK2, PYDC1, PYDC2, NLRP10, CASP8, CHUK, IKBKB and BAX. Component of the AIM2 PANoptosome complex, a multiprotein complex that drives inflammatory cell death (PANoptosis). In terms of processing, phosphorylated. 'Lys-63'-linked polyubiquitination by TRAF3 is critical for speck formation and inflammasome activation. 'Lys-63'-linked deubiquitinated by USP50; a crucial step for NLRP3-mediated inflammasome activation. 'Lys-63'-linked polyubiquitination by PELI1 is also critical for speck formation and inflammasome activation. Deubiquitinated by USP3 that cleaves 'Lys-48'-linked ubiquitin chains and strengthens its stability by blocking proteasomal degradation.

Its subcellular location is the cytoplasm. The protein resides in the inflammasome. The protein localises to the endoplasmic reticulum. It localises to the mitochondrion. It is found in the nucleus. Functionally, functions as a key mediator in apoptosis and inflammation. Promotes caspase-mediated apoptosis involving predominantly caspase-8 and also caspase-9 in a probable cell type-specific manner. Involved in activation of the mitochondrial apoptotic pathway, promotes caspase-8-dependent proteolytic maturation of BID independently of FADD in certain cell types and also mediates mitochondrial translocation of BAX and activates BAX-dependent apoptosis coupled to activation of caspase-9, -2 and -3. Involved in innate immune response by acting as an integral adapter in the assembly of various inflammasomes (NLRP2, NLRP3, NLRP6 and AIM2) which recruit and activate caspase-1 leading to processing and secretion of pro-inflammatory cytokines. Caspase-1-dependent inflammation leads to macrophage pyroptosis, a form of cell death. The function as activating adapter in different types of inflammasomes is mediated by the pyrin and CARD domains and their homotypic interactions. Clustered PYCARD nucleates the formation of caspase-1 filaments through the interaction of their respective CARD domains, acting as a platform for of caspase-1 polymerization. In the NLRC4 inflammasomes seems not be required but facilitates the processing of procaspase-1. In cooperation with NOD2 involved in an inflammasome activated by bacterial muramyl dipeptide leading to caspase-1 activation. May be involved in RIGI-triggered pro-inflammatory responses and inflammasome activation. In collaboration with AIM2 which detects cytosolic double-stranded DNA may also be involved in a caspase-1-independent cell death that involves caspase-8. In adaptive immunity may be involved in maturation of dendritic cells to stimulate T-cell immunity and in cytoskeletal rearrangements coupled to chemotaxis and antigen uptake may be involved in post-transcriptional regulation of the guanine nucleotide exchange factor DOCK2; the latter function is proposed to involve the nuclear form. Also involved in transcriptional activation of cytokines and chemokines independent of the inflammasome; this function may involve AP-1, NF-kappa-B, MAPK and caspase-8 signaling pathways. For regulation of NF-kappa-B activating and inhibiting functions have been reported. Modulates NF-kappa-B induction at the level of the IKK complex by inhibiting kinase activity of CHUK and IKBK. Proposed to compete with RIPK2 for association with CASP1 thereby down-regulating CASP1-mediated RIPK2-dependent NF-kappa-B activation and activating interleukin-1 beta processing. Modulates host resistance to DNA virus infection, probably by inducing the cleavage of and inactivating CGAS in presence of cytoplasmic double-stranded DNA. This Bos taurus (Bovine) protein is Apoptosis-associated speck-like protein containing a CARD (PYCARD).